The following is a 134-amino-acid chain: Methylmalonyl-CoA decarboxylase subunit gamma (134 aa).

Low complexity predominate over residues 28–38 (APAARPAAAPA). Residues 28–67 (APAARPAAAPAPAAPKPAAAPAPAPAPKTTAAGAGAGANT) form a disordered region. The segment covering 39 to 53 (PAAPKPAAAPAPAPA) has biased composition (pro residues). The span at 54–67 (PKTTAAGAGAGANT) shows a compositional bias: low complexity. The region spanning 58–134 (AAGAGAGANT…NAGDILVVLS (77 aa)) is the Biotinyl-binding domain. N6-biotinyllysine is present on Lys100.

The methylmalonyl-CoA decarboxylase is composed of four subunits: the carboxyltransferase alpha subunit (MmdA), the tunnel beta subunit (MmdB), the biotin-containing gamma subunit (MmdC) and the delta subunit (MmdD). It depends on biotin as a cofactor.

It is found in the cell membrane. The enzyme catalyses (S)-methylmalonyl-CoA + Na(+)(in) + H(+)(out) = propanoyl-CoA + Na(+)(out) + CO2. Its function is as follows. Biotin-containing subunit of the sodium ion pump methylmalonyl-CoA decarboxylase, which converts the chemical energy of a decarboxylation reaction into an electrochemical gradient of Na(+) ions across the cytoplasmic membrane, thereby creating a sodium ion motive force that is used for ATP synthesis. The chain is Methylmalonyl-CoA decarboxylase subunit gamma from Propionigenium modestum.